Reading from the N-terminus, the 674-residue chain is Methionine--tRNA ligase (674 aa).

The 'HIGH' region signature appears at 11 to 21 (PYANGDLHLGH). Residues cysteine 142, cysteine 145, cysteine 155, and cysteine 158 each coordinate Zn(2+). The short motif at 330-334 (KMSKS) is the 'KMSKS' region element. Lysine 333 lines the ATP pocket. A tRNA-binding domain is found at 574-674 (DFMKVDLRIA…EGAQPGMRVK (101 aa)).

The protein belongs to the class-I aminoacyl-tRNA synthetase family. MetG type 1 subfamily. As to quaternary structure, homodimer. It depends on Zn(2+) as a cofactor.

It is found in the cytoplasm. It catalyses the reaction tRNA(Met) + L-methionine + ATP = L-methionyl-tRNA(Met) + AMP + diphosphate. Its function is as follows. Is required not only for elongation of protein synthesis but also for the initiation of all mRNA translation through initiator tRNA(fMet) aminoacylation. The polypeptide is Methionine--tRNA ligase (Francisella tularensis subsp. holarctica (strain FTNF002-00 / FTA)).